Reading from the N-terminus, the 84-residue chain is CDC42 small effector protein 2 (84 aa).

S-palmitoyl cysteine attachment occurs at residues cysteine 10 and cysteine 11. The CRIB domain maps to 29-42; the sequence is IGEPTNFVHTAHVG. Residues serine 43 and serine 52 each carry the phosphoserine modification.

Belongs to the CDC42SE/SPEC family. As to quaternary structure, interacts with CDC42 (in GTP-bound form). Interacts weakly with RAC1 and not at all with RHOA.

The protein resides in the cytoplasm. Its subcellular location is the cytoskeleton. It is found in the cell membrane. The protein localises to the cell projection. It localises to the phagocytic cup. In terms of biological role, probably involved in the organization of the actin cytoskeleton by acting downstream of CDC42, inducing actin filament assembly. Alters CDC42-induced cell shape changes. In activated T-cells, may play a role in CDC42-mediated F-actin accumulation at the immunological synapse. May play a role in early contractile events in phagocytosis in macrophages. The sequence is that of CDC42 small effector protein 2 (CDC42SE2) from Bos taurus (Bovine).